Reading from the N-terminus, the 410-residue chain is Iron-sulfur cluster assembly SufBD family protein MTH1150 homolog (410 aa).

The protein belongs to the iron-sulfur cluster assembly SufBD family.

This is Iron-sulfur cluster assembly SufBD family protein MTH1150 homolog from Methanothermobacter thermautotrophicus (strain Winter) (Methanobacterium thermoautotrophicum).